Consider the following 149-residue polypeptide: Transcriptional repressor NrdR (149 aa).

A zinc finger lies at C3–C34. The ATP-cone domain occupies P49–E139.

This sequence belongs to the NrdR family. It depends on Zn(2+) as a cofactor.

In terms of biological role, negatively regulates transcription of bacterial ribonucleotide reductase nrd genes and operons by binding to NrdR-boxes. This Mannheimia succiniciproducens (strain KCTC 0769BP / MBEL55E) protein is Transcriptional repressor NrdR.